The chain runs to 197 residues: Phospholipid hydroperoxide glutathione peroxidase (197 aa).

Ser40 carries the post-translational modification Phosphoserine. Sec73 is a catalytic residue. Residue Sec73 is a non-standard amino acid, selenocysteine.

This sequence belongs to the glutathione peroxidase family. Monomer. Has a tendency to form higher mass oligomers. Interacts with FUNDC1; this interaction promotes GPX4 recruitment into mitochondria through TOM/TIM complex where it is degraded by mitophagy. Expressed in testis. Also expressed in liver, lung, kidney and spinal cord.

The protein localises to the mitochondrion. Its subcellular location is the cytoplasm. The enzyme catalyses a hydroperoxy polyunsaturated fatty acid + 2 glutathione = a hydroxy polyunsaturated fatty acid + glutathione disulfide + H2O. The catalysed reaction is 2 glutathione + H2O2 = glutathione disulfide + 2 H2O. It catalyses the reaction tert-butyl hydroperoxide + 2 glutathione = tert-butanol + glutathione disulfide + H2O. It carries out the reaction cumene hydroperoxide + 2 glutathione = 2-phenylpropan-2-ol + glutathione disulfide + H2O. The enzyme catalyses (9S)-hydroperoxy-(10E,12Z)-octadecadienoate + 2 glutathione = (9S)-hydroxy-(10E,12Z)-octadecadienoate + glutathione disulfide + H2O. The catalysed reaction is (13S)-hydroperoxy-(9Z,11E)-octadecadienoate + 2 glutathione = (13S)-hydroxy-(9Z,11E)-octadecadienoate + glutathione disulfide + H2O. It catalyses the reaction (5S)-hydroperoxy-(6E,8Z,11Z,14Z)-eicosatetraenoate + 2 glutathione = (5S)-hydroxy-(6E,8Z,11Z,14Z)-eicosatetraenoate + glutathione disulfide + H2O. It carries out the reaction (12R)-hydroperoxy-(5Z,8Z,10E,14Z)-eicosatetraenoate + 2 glutathione = (12R)-hydroxy-(5Z,8Z,10E,14Z)-eicosatetraenoate + glutathione disulfide + H2O. The enzyme catalyses (12S)-hydroperoxy-(5Z,8Z,10E,14Z)-eicosatetraenoate + 2 glutathione = (12S)-hydroxy-(5Z,8Z,10E,14Z)-eicosatetraenoate + glutathione disulfide + H2O. The catalysed reaction is (15S)-hydroperoxy-(5Z,8Z,11Z,13E)-eicosatetraenoate + 2 glutathione = (15S)-hydroxy-(5Z,8Z,11Z,13E)-eicosatetraenoate + glutathione disulfide + H2O. It catalyses the reaction (5S)-hydroperoxy-(6E,8Z,11Z,14Z,17Z)-eicosapentaenoate + 2 glutathione = (5S)-hydroxy-(6E,8Z,11Z,14Z,17Z)-eicosapentaenoate + glutathione disulfide + H2O. It carries out the reaction (12S)-hydroperoxy-(5Z,8Z,10E,14Z,17Z)-eicosapentaenoate + 2 glutathione = (12S)-hydroxy-(5Z,8Z,10E,14Z,17Z)-eicosapentaenoate + glutathione disulfide + H2O. The enzyme catalyses (15S)-hydroperoxy-(5Z,8Z,11Z,13E,17Z)-eicosapentaenoate + 2 glutathione = (15S)-hydroxy-(5Z,8Z,11Z,13E,17Z)-eicosapentaenoate + glutathione disulfide + H2O. The catalysed reaction is (15S)-hydroperoxy-(11Z,13E)-eicosadienoate + 2 glutathione = (15S)-hydroxy-(11Z,13E)-eicosadienoate + glutathione disulfide + H2O. It catalyses the reaction (17S)-hydroperoxy-(4Z,7Z,10Z,13Z,15E,19Z)-docosahexaenoate + 2 glutathione = (17S)-hydroxy-(4Z,7Z,10Z,13Z,15E,19Z)-docosahexaenoate + glutathione disulfide + H2O. It carries out the reaction a hydroperoxy-1,2-diacyl-glycero-3-phosphocholine + 2 glutathione = a hydroxy-1,2-diacyl-glycero-3-phosphocholine + glutathione disulfide + H2O. In terms of biological role, essential antioxidant peroxidase that directly reduces phospholipid hydroperoxide even if they are incorporated in membranes and lipoproteins. Can also reduce fatty acid hydroperoxide, cholesterol hydroperoxide and thymine hydroperoxide. Plays a key role in protecting cells from oxidative damage by preventing membrane lipid peroxidation. Required to prevent cells from ferroptosis, a non-apoptotic cell death resulting from an iron-dependent accumulation of lipid reactive oxygen species. The presence of selenocysteine (Sec) versus Cys at the active site is essential for life: it provides resistance to overoxidation and prevents cells against ferroptosis. The presence of Sec at the active site is also essential for the survival of a specific type of parvalbumin-positive interneurons, thereby preventing against fatal epileptic seizures. May be required to protect cells from the toxicity of ingested lipid hydroperoxides. Required for normal sperm development and male fertility. Essential for maturation and survival of photoreceptor cells. Plays a role in a primary T-cell response to viral and parasitic infection by protecting T-cells from ferroptosis and by supporting T-cell expansion. Plays a role of glutathione peroxidase in platelets in the arachidonic acid metabolism. Reduces hydroperoxy ester lipids formed by a 15-lipoxygenase that may play a role as down-regulator of the cellular 15-lipoxygenase pathway. Can also reduce small soluble hydroperoxides such as H2O2, cumene hydroperoxide and tert-butyl hydroperoxide. This chain is Phospholipid hydroperoxide glutathione peroxidase, found in Callithrix jacchus (White-tufted-ear marmoset).